Here is a 350-residue protein sequence, read N- to C-terminus: Putative D-xylulose reductase (350 aa).

3 residues coordinate Zn(2+): Cys-43, His-68, and Glu-154.

The protein belongs to the zinc-containing alcohol dehydrogenase family. The cofactor is Zn(2+).

It catalyses the reaction xylitol + NAD(+) = D-xylulose + NADH + H(+). In Agrobacterium fabrum (strain C58 / ATCC 33970) (Agrobacterium tumefaciens (strain C58)), this protein is Putative D-xylulose reductase.